A 321-amino-acid polypeptide reads, in one-letter code: Mas-related G-protein coupled receptor member B4 (321 aa).

Residues Met1–Asn33 lie on the Extracellular side of the membrane. Residues Asn11 and Asn16 are each glycosylated (N-linked (GlcNAc...) asparagine). The chain crosses the membrane as a helical span at residues Phe34–Leu54. At Ala55–Ala62 the chain is on the cytoplasmic side. A helical membrane pass occupies residues Phe63–Val83. Residues His84 to Phe97 are Extracellular-facing. N-linked (GlcNAc...) asparagine glycosylation is present at Asn94. The helical transmembrane segment at Tyr98–Ile118 threads the bilayer. The Cytoplasmic portion of the chain corresponds to Ser119–Ala146. The chain crosses the membrane as a helical span at residues Leu147–Phe167. Residues Ser168–Tyr172 are Extracellular-facing. Residues Tyr173 to Leu193 form a helical membrane-spanning segment. Topologically, residues Ser194–Arg215 are cytoplasmic. The chain crosses the membrane as a helical span at residues Phe216–Ile236. Residues Cys237 to Glu257 are Extracellular-facing. The chain crosses the membrane as a helical span at residues Ile258–Gly278. The Cytoplasmic portion of the chain corresponds to Ser279 to Val321. The segment at Gln299 to Val321 is disordered.

This sequence belongs to the G-protein coupled receptor 1 family. Mas subfamily.

It localises to the membrane. In terms of biological role, orphan receptor. Probably involved in the function of nociceptive neurons. May regulate nociceptor function and/or development, including the sensation or modulation of pain. The polypeptide is Mas-related G-protein coupled receptor member B4 (Mrgprb4) (Mus musculus (Mouse)).